We begin with the raw amino-acid sequence, 464 residues long: Sensor histidine kinase Hik34 (464 aa).

Residues 235–449 form the Histidine kinase domain; the sequence is ALTHEVRTPL…ILTIYLKCEQ (215 aa). A Phosphohistidine; by autocatalysis modification is found at His-238.

Post-translationally, when expressed in E.coli autophosphorylates at 18 to 30 degrees Celsius; less phosphorylation occurs at 36 and none occurs at 42 or 48 degrees Celsius.

The enzyme catalyses ATP + protein L-histidine = ADP + protein N-phospho-L-histidine.. Functionally, member of a two-component system Hik34/Rre1, controlling expression of at least 20 genes in response to hyperosmotic stress (0.5 M sorbitol) or salt (0.5 M NaCl). Represses expression of heat shock genes under normal growth conditions. Required for survival of long-term heat shock exposure. This chain is Sensor histidine kinase Hik34, found in Synechocystis sp. (strain ATCC 27184 / PCC 6803 / Kazusa).